Consider the following 193-residue polypeptide: Potassium-transporting ATPase KdpC subunit (193 aa).

A helical membrane pass occupies residues 14-34 (ITFTFLVLCGLVYPLIVTGIA).

It belongs to the KdpC family. As to quaternary structure, the system is composed of three essential subunits: KdpA, KdpB and KdpC.

It localises to the cell membrane. Part of the high-affinity ATP-driven potassium transport (or Kdp) system, which catalyzes the hydrolysis of ATP coupled with the electrogenic transport of potassium into the cytoplasm. This subunit acts as a catalytic chaperone that increases the ATP-binding affinity of the ATP-hydrolyzing subunit KdpB by the formation of a transient KdpB/KdpC/ATP ternary complex. The polypeptide is Potassium-transporting ATPase KdpC subunit (Bacillus cereus (strain B4264)).